The primary structure comprises 25 residues: Granule-bound starch synthase 1, chloroplastic/amyloplastic (25 aa).

K16 contributes to the ADP-alpha-D-glucose binding site.

This sequence belongs to the glycosyltransferase 1 family. Bacterial/plant glycogen synthase subfamily. In terms of tissue distribution, expressed in endosperm.

Its subcellular location is the plastid. It localises to the chloroplast. It is found in the amyloplast. The catalysed reaction is an NDP-alpha-D-glucose + [(1-&gt;4)-alpha-D-glucosyl](n) = [(1-&gt;4)-alpha-D-glucosyl](n+1) + a ribonucleoside 5'-diphosphate + H(+). The protein operates within glycan biosynthesis; starch biosynthesis. Required for the synthesis of amylose in endosperm. The sequence is that of Granule-bound starch synthase 1, chloroplastic/amyloplastic from Fagopyrum esculentum (Common buckwheat).